The following is an 812-amino-acid chain: Fibrous sheath CABYR-binding protein (812 aa).

A disordered region spans residues 1–66 (MEESDEPEQP…SIGNIPGGKA (66 aa)). 6 positions are modified to phosphoserine: Ser25, Ser57, Ser125, Ser133, Ser184, and Ser273. 4 disordered regions span residues 269-333 (IQAP…PKGT), 367-388 (DSGRAESTTVEEATGEVQPPLS), 424-547 (FEDQ…PPSL), and 672-741 (PAEE…PSVK). The span at 275-286 (AKETSAAETTAK) shows a compositional bias: low complexity. Residues 488 to 501 (EVPPLPTEEWPLPP) show a composition bias toward pro residues. The span at 502-513 (VTEESPAEVTPP) shows a compositional bias: low complexity. A compositionally biased stretch (acidic residues) spans 514 to 528 (ETEEGPIEPAEEGPE).

In terms of assembly, interacts with CABYR.

It is found in the cell projection. Its subcellular location is the cilium. It localises to the flagellum. May be involved in the later stages of fibrous sheath biogenesis. Binds calcium. The protein is Fibrous sheath CABYR-binding protein of Rattus norvegicus (Rat).